The following is an 83-amino-acid chain: Kunitz-type serine protease inhibitor superbin-1 (83 aa).

A signal peptide spans 1 to 24 (MSSGGLLLLLGLLTLWEVLTPVSS). In terms of domain architecture, BPTI/Kunitz inhibitor spans 31-81 (CKLPADTGRCKGKFPAFYYHPVHRTCLEFIYGGCKGNPNNFKTIDECERTC). 3 disulfides stabilise this stretch: C31–C81, C40–C64, and C56–C77.

It belongs to the venom Kunitz-type family. In terms of tissue distribution, expressed by the venom gland.

It is found in the secreted. Its function is as follows. Serine protease inhibitor. The chain is Kunitz-type serine protease inhibitor superbin-1 from Austrelaps superbus (Lowland copperhead snake).